Consider the following 384-residue polypeptide: Probable RNA 3'-terminal phosphate cyclase-like protein (384 aa).

The protein belongs to the RNA 3'-terminal cyclase family. Type 2 subfamily. Part of the small subunit (SSU) processome, composed of more than 70 proteins and the RNA chaperone small nucleolar RNA (snoRNA) U3.

It localises to the nucleus. The protein localises to the nucleolus. Its function is as follows. Part of the small subunit (SSU) processome, first precursor of the small eukaryotic ribosomal subunit. During the assembly of the SSU processome in the nucleolus, many ribosome biogenesis factors, an RNA chaperone and ribosomal proteins associate with the nascent pre-rRNA and work in concert to generate RNA folding, modifications, rearrangements and cleavage as well as targeted degradation of pre-ribosomal RNA by the RNA exosome. Does not have cyclase activity. The protein is Probable RNA 3'-terminal phosphate cyclase-like protein (Rtc1) of Drosophila melanogaster (Fruit fly).